The primary structure comprises 2293 residues: Protein Ycf2 (2293 aa).

1642–1649 (GSIGTGRS) provides a ligand contact to ATP.

Belongs to the Ycf2 family.

The protein localises to the plastid. Its subcellular location is the chloroplast stroma. Probable ATPase of unknown function. Its presence in a non-photosynthetic plant (Epifagus virginiana) and experiments in tobacco indicate that it has an essential function which is probably not related to photosynthesis. The chain is Protein Ycf2 from Platanus occidentalis (Sycamore).